The sequence spans 148 residues: Arginine repressor (148 aa).

It belongs to the ArgR family.

The protein localises to the cytoplasm. It functions in the pathway amino-acid biosynthesis; L-arginine biosynthesis [regulation]. Regulates arginine biosynthesis genes. This is Arginine repressor (argR) from Streptococcus pneumoniae serotype 4 (strain ATCC BAA-334 / TIGR4).